The sequence spans 198 residues: Peptidyl-tRNA hydrolase (198 aa).

A tRNA-binding site is contributed by Y18. H23 serves as the catalytic Proton acceptor. TRNA is bound by residues Y69, N71, and N117.

Belongs to the PTH family. As to quaternary structure, monomer.

The protein localises to the cytoplasm. The enzyme catalyses an N-acyl-L-alpha-aminoacyl-tRNA + H2O = an N-acyl-L-amino acid + a tRNA + H(+). Its function is as follows. Hydrolyzes ribosome-free peptidyl-tRNAs (with 1 or more amino acids incorporated), which drop off the ribosome during protein synthesis, or as a result of ribosome stalling. In terms of biological role, catalyzes the release of premature peptidyl moieties from peptidyl-tRNA molecules trapped in stalled 50S ribosomal subunits, and thus maintains levels of free tRNAs and 50S ribosomes. In Aeromonas hydrophila subsp. hydrophila (strain ATCC 7966 / DSM 30187 / BCRC 13018 / CCUG 14551 / JCM 1027 / KCTC 2358 / NCIMB 9240 / NCTC 8049), this protein is Peptidyl-tRNA hydrolase.